The sequence spans 151 residues: 18 kDa heat shock protein (151 aa).

The region spanning 38-151 (TFNGNAGFKV…KDNGRRIDIH (114 aa)) is the sHSP domain.

This sequence belongs to the small heat shock protein (HSP20) family.

In terms of biological role, probable chaperone. This chain is 18 kDa heat shock protein (hsp18), found in Clostridium acetobutylicum (strain ATCC 824 / DSM 792 / JCM 1419 / IAM 19013 / LMG 5710 / NBRC 13948 / NRRL B-527 / VKM B-1787 / 2291 / W).